The sequence spans 298 residues: DNA-binding transcriptional activator HetR (298 aa).

Serine 152 is a catalytic residue.

This sequence belongs to the peptidase S48 family. As to quaternary structure, homodimer; disulfide-linked.

In terms of biological role, controls heterocyst differentiation. Dimerization is required for DNA-binding. Has both a protease and a DNA-binding activity. In Nostoc sp. (strain PCC 9229), this protein is DNA-binding transcriptional activator HetR.